The sequence spans 353 residues: Protein-glutamate methylesterase/protein-glutamine glutaminase 4 (353 aa).

Residues 7-124 (RILVAEDSPT…SPDFDADSRR (118 aa)) enclose the Response regulatory domain. A 4-aspartylphosphate modification is found at D58. One can recognise a CheB-type methylesterase domain in the interval 158 to 350 (PVSPTRPGVV…SRLTSAFRGS (193 aa)). Residues S172, H199, and D292 contribute to the active site.

Belongs to the CheB family. Post-translationally, phosphorylated by CheA. Phosphorylation of the N-terminal regulatory domain activates the methylesterase activity.

The protein resides in the cytoplasm. The catalysed reaction is [protein]-L-glutamate 5-O-methyl ester + H2O = L-glutamyl-[protein] + methanol + H(+). The enzyme catalyses L-glutaminyl-[protein] + H2O = L-glutamyl-[protein] + NH4(+). Functionally, involved in chemotaxis. Part of a chemotaxis signal transduction system that modulates chemotaxis in response to various stimuli. Catalyzes the demethylation of specific methylglutamate residues introduced into the chemoreceptors (methyl-accepting chemotaxis proteins or MCP) by CheR. Also mediates the irreversible deamidation of specific glutamine residues to glutamic acid. This is Protein-glutamate methylesterase/protein-glutamine glutaminase 4 from Myxococcus xanthus (strain DK1622).